Here is a 300-residue protein sequence, read N- to C-terminus: Epimerase family protein SAB0724c (300 aa).

This sequence belongs to the NAD(P)-dependent epimerase/dehydratase family. SDR39U1 subfamily.

In Staphylococcus aureus (strain bovine RF122 / ET3-1), this protein is Epimerase family protein SAB0724c.